The following is an 853-amino-acid chain: Penicillin-binding protein 1A (853 aa).

Over Met1–Leu6 the chain is Cytoplasmic. A helical; Signal-anchor for type II membrane protein membrane pass occupies residues Ile7–Phe27. Residues His28–Phe853 are Periplasmic-facing. The tract at residues Met37–Lys205 is transglycosylase. Catalysis depends on Glu75, which acts as the Proton donor; for transglycosylase activity. The tract at residues Gln387–Leu681 is transpeptidase. Ser441 serves as the catalytic Acyl-ester intermediate; for transpeptidase activity. Positions Asn615–Val636 are disordered.

The protein in the N-terminal section; belongs to the glycosyltransferase 51 family. It in the C-terminal section; belongs to the transpeptidase family.

The protein resides in the cell inner membrane. The catalysed reaction is [GlcNAc-(1-&gt;4)-Mur2Ac(oyl-L-Ala-gamma-D-Glu-L-Lys-D-Ala-D-Ala)](n)-di-trans,octa-cis-undecaprenyl diphosphate + beta-D-GlcNAc-(1-&gt;4)-Mur2Ac(oyl-L-Ala-gamma-D-Glu-L-Lys-D-Ala-D-Ala)-di-trans,octa-cis-undecaprenyl diphosphate = [GlcNAc-(1-&gt;4)-Mur2Ac(oyl-L-Ala-gamma-D-Glu-L-Lys-D-Ala-D-Ala)](n+1)-di-trans,octa-cis-undecaprenyl diphosphate + di-trans,octa-cis-undecaprenyl diphosphate + H(+). It catalyses the reaction Preferential cleavage: (Ac)2-L-Lys-D-Ala-|-D-Ala. Also transpeptidation of peptidyl-alanyl moieties that are N-acyl substituents of D-alanine.. Its pathway is cell wall biogenesis; peptidoglycan biosynthesis. Cell wall formation. Synthesis of cross-linked peptidoglycan from the lipid intermediates. The enzyme has a penicillin-insensitive transglycosylase N-terminal domain (formation of linear glycan strands) and a penicillin-sensitive transpeptidase C-terminal domain (cross-linking of the peptide subunits). This chain is Penicillin-binding protein 1A (mrcA), found in Haemophilus influenzae (strain ATCC 51907 / DSM 11121 / KW20 / Rd).